Consider the following 441-residue polypeptide: Homoserine dehydrogenase (441 aa).

The NADP(+) site is built by asparagine 17 and valine 18. Residues valine 18 and glycine 47 each coordinate NAD(+). NADPH is bound at residue valine 18. NADP(+)-binding residues include arginine 49, arginine 50, and lysine 107. Residue arginine 49 coordinates NADPH. NADPH is bound at residue lysine 107. Na(+) contacts are provided by glutamate 131, valine 134, glycine 136, and isoleucine 138. Residues glycine 189 and glutamate 192 each contribute to the NADP(+) site. L-homoserine contacts are provided by glutamate 192 and aspartate 203. Residue lysine 207 is the Proton donor of the active site. Residue glycine 309 coordinates NADP(+). Glycine 309 provides a ligand contact to NAD(+). Glycine 309 contributes to the NADPH binding site. In terms of domain architecture, ACT spans 356–435; sequence YVSMNVADKP…VVQGVTSVLR (80 aa).

It belongs to the homoserine dehydrogenase family. A metal cation is required as a cofactor.

It catalyses the reaction L-homoserine + NADP(+) = L-aspartate 4-semialdehyde + NADPH + H(+). The enzyme catalyses L-homoserine + NAD(+) = L-aspartate 4-semialdehyde + NADH + H(+). It participates in amino-acid biosynthesis; L-methionine biosynthesis via de novo pathway; L-homoserine from L-aspartate: step 3/3. The protein operates within amino-acid biosynthesis; L-threonine biosynthesis; L-threonine from L-aspartate: step 3/5. Catalyzes the conversion of L-aspartate-beta-semialdehyde (L-Asa) to L-homoserine (L-Hse), the third step in the biosynthesis of threonine and methionine from aspartate. This Mycobacterium leprae (strain TN) protein is Homoserine dehydrogenase (hom).